The primary structure comprises 748 residues: EF-hand domain-containing family member C2 (748 aa).

DM10 domains follow at residues 75–182 (DKQV…VKMG), 226–366 (DRQV…RSKY), and 428–535 (VSNV…EQHA). EF-hand domains lie at 556-591 (EQQK…LDVE) and 631-666 (EKFS…FRLP).

The protein localises to the cytoplasm. The protein resides in the cytoskeleton. Its subcellular location is the cilium axoneme. In terms of biological role, microtubule inner protein (MIP) part of the dynein-decorated doublet microtubules (DMTs) in cilia axoneme, which is required for motile cilia beating. In Danio rerio (Zebrafish), this protein is EF-hand domain-containing family member C2 (efhc2).